We begin with the raw amino-acid sequence, 711 residues long: Constitutive ornithine decarboxylase (711 aa).

Lys347 carries the N6-(pyridoxal phosphate)lysine modification.

This sequence belongs to the Orn/Lys/Arg decarboxylase class-I family. Requires pyridoxal 5'-phosphate as cofactor.

The enzyme catalyses L-ornithine + H(+) = putrescine + CO2. It functions in the pathway amine and polyamine biosynthesis; putrescine biosynthesis via L-ornithine pathway; putrescine from L-ornithine: step 1/1. The chain is Constitutive ornithine decarboxylase (speC) from Escherichia coli (strain K12).